The chain runs to 314 residues: Coiled-coil domain-containing protein 69 (314 aa).

Over residues 1–12 (MGCHNSKVCGQV) the composition is skewed to low complexity. Disordered regions lie at residues 1–43 (MGCH…HSSE) and 114–133 (RSVS…LHSE). Gly-2 carries the N-myristoyl glycine lipid modification. 2 stretches are compositionally biased toward basic and acidic residues: residues 20-43 (KAQE…HSSE) and 120-133 (HQSE…LHSE). The stretch at 106-291 (NDLHEQQMRS…QEKEELLFKL (186 aa)) forms a coiled coil.

This sequence belongs to the CCDC69 family.

Its subcellular location is the cytoplasm. It is found in the cytoskeleton. The protein localises to the spindle. The protein resides in the midbody. Its function is as follows. May act as a scaffold to regulate the recruitment and assembly of spindle midzone components. The sequence is that of Coiled-coil domain-containing protein 69 (ccdc69) from Danio rerio (Zebrafish).